The primary structure comprises 447 residues: ATP-dependent protease ATPase subunit HslU (447 aa).

Residues Ile18, 60–65, Asp260, Glu325, and Arg397 each bind ATP; that span reads GVGKTE.

This sequence belongs to the ClpX chaperone family. HslU subfamily. A double ring-shaped homohexamer of HslV is capped on each side by a ring-shaped HslU homohexamer. The assembly of the HslU/HslV complex is dependent on binding of ATP.

The protein resides in the cytoplasm. Functionally, ATPase subunit of a proteasome-like degradation complex; this subunit has chaperone activity. The binding of ATP and its subsequent hydrolysis by HslU are essential for unfolding of protein substrates subsequently hydrolyzed by HslV. HslU recognizes the N-terminal part of its protein substrates and unfolds these before they are guided to HslV for hydrolysis. In Paraburkholderia phymatum (strain DSM 17167 / CIP 108236 / LMG 21445 / STM815) (Burkholderia phymatum), this protein is ATP-dependent protease ATPase subunit HslU.